The sequence spans 695 residues: A-kinase anchor protein 17A (695 aa).

Positions 83-112 (VENKSLVKSFLACLDGKTIKLSGFSDILKV) are PKA-RI and PKA-RII subunit binding domain. A Glycyl lysine isopeptide (Lys-Gly) (interchain with G-Cter in SUMO1); alternate cross-link involves residue Lys-118. Lys-118 is covalently cross-linked (Glycyl lysine isopeptide (Lys-Gly) (interchain with G-Cter in SUMO2); alternate). Residues 147–256 (DTIHLEGLPC…KAVACNIKVS (110 aa)) enclose the RRM domain. Residues 279–337 (QELEQQREEQKRREKEAEERQRAEERKQKELEELERERKREEKLRKREQKQRDRELRRN) form a disordered region. The PKA-RI-alpha subunit binding domain stretch occupies residues 425–454 (LGLQRKERELRERLLSILLSKKPDDSHTHD). Positions 482-695 (TTLHPLGGQP…PSRHRSTWNR (214 aa)) are disordered. Ser-537 carries the post-translational modification Phosphoserine. The segment covering 567-585 (VSRKDTRSEQDKCNREPSK) has biased composition (basic and acidic residues). 2 stretches are compositionally biased toward basic residues: residues 598 to 609 (RHKRERSRARRA) and 618 to 628 (RKERRPHKKHA). A compositionally biased stretch (basic and acidic residues) spans 629 to 644 (YKDDSPRRRSTSPDHT). Ser-633 bears the Phosphoserine mark. Basic residues-rich tracts occupy residues 645–658 (RSRR…HRRE) and 666–695 (SASR…TWNR).

Monomer. Component of the spliceosome. Interacts with ZRANB2 and SFRS1/ASF through its Arg/Ser-rich domain. Interacts with RI and RII subunits of PKA. As to expression, widely expressed. Found in heart, brain, lung, liver, skeletal muscle, kidney and pancreas. Expressed in activated B-cells and placenta. Expressed in all cell lines tested including Jurkat-TAg, U-937 and HEK293 cells.

It is found in the nucleus speckle. Its function is as follows. Splice factor regulating alternative splice site selection for certain mRNA precursors. Mediates regulation of pre-mRNA splicing in a PKA-dependent manner. The protein is A-kinase anchor protein 17A (AKAP17A) of Homo sapiens (Human).